The primary structure comprises 492 residues: MTDLHRLSVRELAEGLGQAQFSSRELTQHYLNRIDKIDAQVKSYVTVTHEQALAQADAADALRQAGNAGFLTGVPLAHKDIFCTKGIKTTAGSKMLDNFISPYNATVVEKANAAGLVTLGKLNMDEFAMGSTSESSYFGATCNPWALDRVPGGSSGGSAAAVAADLAPFATGTDTGGSIRQPASFCGLTGLKPTYGRVSRFGMIAYASSLDQGGPMARSAEDCAYLMNVMAGHDAKDSTSVKKDVDDYVANLNATALKGLRIGIPKQYFNVAGLDAEVKARVEESLKKLEEMGAVLVEIDLSMTESYVPTYYLIAPAEASSNLSRYDGVRYGYRCENPVDLMDLYKRSRSEGFGAEVQRRILIGTYALSAGYYDAYYVKAQKVRRLIQQDFLKAFENVDVIAAPSAPTTAYKIGADLTPVEMYLGDIYTLAVNLAGLPAINAPVGLDSNNLPVGLQLIGNYWSESQLLSIVHQYQQDTTFHTQRAAIAEENA.

Active-site charge relay system residues include lysine 79 and serine 154. Serine 178 acts as the Acyl-ester intermediate in catalysis.

This sequence belongs to the amidase family. GatA subfamily. Heterotrimer of A, B and C subunits.

The catalysed reaction is L-glutamyl-tRNA(Gln) + L-glutamine + ATP + H2O = L-glutaminyl-tRNA(Gln) + L-glutamate + ADP + phosphate + H(+). Allows the formation of correctly charged Gln-tRNA(Gln) through the transamidation of misacylated Glu-tRNA(Gln) in organisms which lack glutaminyl-tRNA synthetase. The reaction takes place in the presence of glutamine and ATP through an activated gamma-phospho-Glu-tRNA(Gln). This Acinetobacter baylyi (strain ATCC 33305 / BD413 / ADP1) protein is Glutamyl-tRNA(Gln) amidotransferase subunit A.